A 381-amino-acid chain; its full sequence is 2-epi-5-epi-valiolone synthase (381 aa).

Residues Asp-50, 81–84 (EEAK), 114–118 (GIVLD), 138–139 (TS), Lys-151, Lys-160, and 178–181 (FLDT) contribute to the NAD(+) site. Lys-151 is an active-site residue. Glu-193, His-264, and His-280 together coordinate a divalent metal cation.

Belongs to the sugar phosphate cyclases superfamily. EEVS family. The cofactor is NAD(+). Requires Co(2+) as cofactor.

It carries out the reaction D-sedoheptulose 7-phosphate = 2-epi-5-epi-valiolone + phosphate. The protein operates within antibiotic biosynthesis. In terms of biological role, catalyzes the cyclization of D-sedoheptulose 7-phosphate to 2-epi-5-epi-valiolone. Involved in cetoniacytone A biosynthesis. The protein is 2-epi-5-epi-valiolone synthase of Actinomyces sp.